Reading from the N-terminus, the 499-residue chain is Glycerol kinase (499 aa).

Thr13 is an ADP binding site. The ATP site is built by Thr13, Thr14, and Ser15. Thr13 is a sn-glycerol 3-phosphate binding site. Arg17 contacts ADP. Sn-glycerol 3-phosphate contacts are provided by Arg83, Glu84, Tyr135, and Asp244. Positions 83, 84, 135, 244, and 245 each coordinate glycerol. ADP is bound by residues Thr266 and Gly309. The ATP site is built by Thr266, Gly309, Gln313, and Gly410. Residues Gly410 and Asn414 each coordinate ADP.

Belongs to the FGGY kinase family.

The catalysed reaction is glycerol + ATP = sn-glycerol 3-phosphate + ADP + H(+). It participates in polyol metabolism; glycerol degradation via glycerol kinase pathway; sn-glycerol 3-phosphate from glycerol: step 1/1. Inhibited by fructose 1,6-bisphosphate (FBP). Functionally, key enzyme in the regulation of glycerol uptake and metabolism. Catalyzes the phosphorylation of glycerol to yield sn-glycerol 3-phosphate. The sequence is that of Glycerol kinase from Paraburkholderia xenovorans (strain LB400).